The sequence spans 113 residues: Prostate and testis expressed protein 2 (113 aa).

The N-terminal stretch at 1–26 (MLVLFLLGTVFLLCPYWGELHDPIKA) is a signal peptide. Residues 29–110 (IMCYECKKYH…CDHSNYCNLP (82 aa)) enclose the UPAR/Ly6 domain. Cystine bridges form between cysteine 31–cysteine 57, cysteine 34–cysteine 42, cysteine 49–cysteine 80, and cysteine 84–cysteine 101.

This sequence belongs to the PATE family. In terms of tissue distribution, isoform 1 and isoform 2 are expressed in prostate and testis. Isoform 2 is expressed in male and female brain at equivalent levels, in particular in cerebellum, cerebral cortex, corpus callosum, occipital, parrietal and temporal lobes, and pons, but not in amygdala, cerebral peduncle, hippocampus and thalamus.

It localises to the secreted. This is Prostate and testis expressed protein 2 (PATE2) from Homo sapiens (Human).